Reading from the N-terminus, the 88-residue chain is UPF0213 protein EF_2693 (88 aa).

Residues 5–82 form the GIY-YIG domain; it reads KSHYFYVLLC…KKLTRKQKEQ (78 aa).

Belongs to the UPF0213 family.

The sequence is that of UPF0213 protein EF_2693 from Enterococcus faecalis (strain ATCC 700802 / V583).